Reading from the N-terminus, the 491-residue chain is HEPACAM family member 2 (491 aa).

Positions 1-18 (MWLRVFTAFLSFTAGACS) are cleaved as a signal peptide. Residues asparagine 73, asparagine 117, and asparagine 153 are each glycosylated (N-linked (GlcNAc...) asparagine). Ig-like C2-type domains are found at residues 137–221 (PVVQ…SDII) and 223–319 (PTIY…THFT). Disulfide bonds link cysteine 158/cysteine 207 and cysteine 258/cysteine 303. N-linked (GlcNAc...) asparagine glycosylation occurs at asparagine 308. Residues 340-360 (LASITGISLFLIISMCLLFLW) form a helical membrane-spanning segment. Residues 361–491 (KKFQPYKVIK…GKHSRAKQCI (131 aa)) lie on the Cytoplasmic side of the membrane. A compositionally biased stretch (polar residues) spans 444–454 (QQQDHPESSSQ). Disordered regions lie at residues 444 to 466 (QQQD…DRHD) and 472 to 491 (ELGH…KQCI). Over residues 472–482 (ELGHCKEQDKG) the composition is skewed to basic and acidic residues.

Poly-ADP-ribosylated (PARsylated) by tankyrase TNKS during late G2 and prophase, leading to translocation to mitotic centrosomes. Post-translationally, N-glycosylated.

It is found in the golgi apparatus membrane. Its subcellular location is the cytoplasm. It localises to the cytoskeleton. The protein localises to the spindle. The protein resides in the microtubule organizing center. It is found in the centrosome. Its subcellular location is the midbody. In terms of biological role, required during prometaphase for centrosome maturation. Following poly-ADP-ribosylation (PARsylation) by TNKS, translocates from the Golgi apparatus to mitotic centrosomes and plays a key role in the formation of robust microtubules for prompt movement of chromosomes: anchors AKAP9/CG-NAP, a scaffold protein of the gamma-tubulin ring complex and promotes centrosome maturation. In Bos taurus (Bovine), this protein is HEPACAM family member 2 (HEPACAM2).